We begin with the raw amino-acid sequence, 416 residues long: Serine hydroxymethyltransferase (416 aa).

(6S)-5,6,7,8-tetrahydrofolate is bound by residues L121 and G125–L127. At K229 the chain carries N6-(pyridoxal phosphate)lysine.

This sequence belongs to the SHMT family. Homodimer. Requires pyridoxal 5'-phosphate as cofactor.

It is found in the cytoplasm. It carries out the reaction (6R)-5,10-methylene-5,6,7,8-tetrahydrofolate + glycine + H2O = (6S)-5,6,7,8-tetrahydrofolate + L-serine. It participates in one-carbon metabolism; tetrahydrofolate interconversion. Its pathway is amino-acid biosynthesis; glycine biosynthesis; glycine from L-serine: step 1/1. Its function is as follows. Catalyzes the reversible interconversion of serine and glycine with tetrahydrofolate (THF) serving as the one-carbon carrier. This reaction serves as the major source of one-carbon groups required for the biosynthesis of purines, thymidylate, methionine, and other important biomolecules. Also exhibits THF-independent aldolase activity toward beta-hydroxyamino acids, producing glycine and aldehydes, via a retro-aldol mechanism. This chain is Serine hydroxymethyltransferase, found in Neisseria meningitidis serogroup C (strain 053442).